The primary structure comprises 441 residues: Serine carboxypeptidase-like 1 (441 aa).

The N-terminal stretch at 1-29 is a signal peptide; the sequence is MANKYVSSVLKSLLVLLHLVFLSKQHVDS. 3 cysteine pairs are disulfide-bonded: Cys-88/Cys-331, Cys-252/Cys-266, and Cys-290/Cys-297. Residue Asn-109 is glycosylated (N-linked (GlcNAc...) asparagine). The active site involves Ser-184. An N-linked (GlcNAc...) asparagine glycan is attached at Asn-350. Residue Asp-366 is part of the active site. The N-linked (GlcNAc...) asparagine glycan is linked to Asn-382. His-419 is a catalytic residue.

It belongs to the peptidase S10 family. In terms of tissue distribution, expressed in seedlings and roots.

It is found in the secreted. Its function is as follows. Probable carboxypeptidase. In Arabidopsis thaliana (Mouse-ear cress), this protein is Serine carboxypeptidase-like 1 (SCPL1).